A 236-amino-acid chain; its full sequence is LexA repressor (236 aa).

Positions 26 to 46 form a DNA-binding region, H-T-H motif; that stretch reads FDEMKEALDLRSKSGIHRLIT. Catalysis depends on for autocatalytic cleavage activity residues Ser-157 and Lys-195.

Belongs to the peptidase S24 family. As to quaternary structure, homodimer.

It catalyses the reaction Hydrolysis of Ala-|-Gly bond in repressor LexA.. Represses a number of genes involved in the response to DNA damage (SOS response), including recA and lexA. In the presence of single-stranded DNA, RecA interacts with LexA causing an autocatalytic cleavage which disrupts the DNA-binding part of LexA, leading to derepression of the SOS regulon and eventually DNA repair. The protein is LexA repressor of Azorhizobium caulinodans (strain ATCC 43989 / DSM 5975 / JCM 20966 / LMG 6465 / NBRC 14845 / NCIMB 13405 / ORS 571).